Reading from the N-terminus, the 104-residue chain is Iron-sulfur cluster assembly protein CyaY (104 aa).

The protein belongs to the frataxin family.

Its function is as follows. Involved in iron-sulfur (Fe-S) cluster assembly. May act as a regulator of Fe-S biogenesis. This is Iron-sulfur cluster assembly protein CyaY from Rickettsia prowazekii (strain Madrid E).